The sequence spans 289 residues: Cyclin-dependent kinase inhibitor 4 (289 aa).

Disordered regions lie at residues 1 to 31, 56 to 160, and 227 to 248; these read MGKY…ESSI, LQQQ…VSES, and SESN…TTPE. Residues 13 to 28 are compositionally biased toward gly residues; sequence AGAGAGGGGGGGGGGE. Residues 56–80 are compositionally biased toward low complexity; sequence LQQQQQRCLLQKPSSPSSLPPTSAS. Polar residues predominate over residues 134–144; the sequence is CGRNPNPRSNL.

It belongs to the CDI family. ICK/KRP subfamily. In terms of assembly, specifically interacts with CDKA-1, but not with CDKB1-1. Interacts with CYCD4-1. Binds to FBL17. As to expression, expressed in leaves and flowers and at lower levels in roots.

The protein localises to the nucleus. It localises to the nucleoplasm. Binds and inhibits CYCD2-1/CDKA-1 complex kinase activity. May target specifically CDKA-1. This Arabidopsis thaliana (Mouse-ear cress) protein is Cyclin-dependent kinase inhibitor 4 (KRP4).